The following is a 228-amino-acid chain: Triosephosphate isomerase (228 aa).

11-13 (NFK) is a binding site for substrate. His95 serves as the catalytic Electrophile. Residue Glu143 is the Proton acceptor of the active site. Residues Ile148, Gly183, and 204 to 205 (AS) contribute to the substrate site.

The protein belongs to the triosephosphate isomerase family. In terms of assembly, homotetramer; dimer of dimers.

It is found in the cytoplasm. The catalysed reaction is D-glyceraldehyde 3-phosphate = dihydroxyacetone phosphate. The protein operates within carbohydrate biosynthesis; gluconeogenesis. It participates in carbohydrate degradation; glycolysis; D-glyceraldehyde 3-phosphate from glycerone phosphate: step 1/1. In terms of biological role, involved in the gluconeogenesis. Catalyzes stereospecifically the conversion of dihydroxyacetone phosphate (DHAP) to D-glyceraldehyde-3-phosphate (G3P). This Pyrococcus horikoshii (strain ATCC 700860 / DSM 12428 / JCM 9974 / NBRC 100139 / OT-3) protein is Triosephosphate isomerase.